The sequence spans 60 residues: Ferredoxin (60 aa).

4Fe-4S ferredoxin-type domains follow at residues 2-30 (VTIDYDKCKGPECAECVNACPMEVFEIQG) and 31-60 (DKVVVAKEDDCTFCMVCVDVCPTDAITVKE). Cysteine 9, cysteine 14, cysteine 17, cysteine 21, cysteine 41, cysteine 44, cysteine 47, and cysteine 51 together coordinate [4Fe-4S] cluster.

Requires [4Fe-4S] cluster as cofactor.

In terms of biological role, ferredoxins are iron-sulfur proteins that transfer electrons probably in the CO-dehydrogenase complex. This chain is Ferredoxin, found in Methanothermococcus thermolithotrophicus (Methanococcus thermolithotrophicus).